The chain runs to 775 residues: 5-methyltetrahydropteroyltriglutamate--homocysteine methyltransferase (775 aa).

5-methyltetrahydropteroyltri-L-glutamate contacts are provided by residues 16 to 19 (REMK) and Lys115. L-homocysteine is bound by residues 435 to 437 (IGS) and Glu488. Residues 435–437 (IGS) and Glu488 each bind L-methionine. 5-methyltetrahydropteroyltri-L-glutamate-binding positions include 519-520 (RC) and Trp565. Residue Asp603 coordinates L-homocysteine. Position 603 (Asp603) interacts with L-methionine. Glu609 lines the 5-methyltetrahydropteroyltri-L-glutamate pocket. Zn(2+) contacts are provided by His645, Cys647, and Glu669. The active-site Proton donor is the His698. Residue Cys730 coordinates Zn(2+).

It belongs to the vitamin-B12 independent methionine synthase family. Zn(2+) is required as a cofactor.

The enzyme catalyses 5-methyltetrahydropteroyltri-L-glutamate + L-homocysteine = tetrahydropteroyltri-L-glutamate + L-methionine. It functions in the pathway amino-acid biosynthesis; L-methionine biosynthesis via de novo pathway; L-methionine from L-homocysteine (MetE route): step 1/1. In terms of biological role, catalyzes the transfer of a methyl group from 5-methyltetrahydrofolate to homocysteine resulting in methionine formation. The protein is 5-methyltetrahydropteroyltriglutamate--homocysteine methyltransferase of Coxiella burnetii (strain CbuG_Q212) (Coxiella burnetii (strain Q212)).